Reading from the N-terminus, the 355-residue chain is Tetraspanin-10 (355 aa).

The tract at residues 1–33 is disordered; the sequence is MEEGERSPLLSQETAGQKPLSVHRPPTSGCLGP. The Cytoplasmic segment spans residues 1 to 78; that stretch reads MEEGERSPLL…LSPGSSCVKY (78 aa). Residues 79 to 99 traverse the membrane as a helical segment; sequence LIFLSNFPFSLLGLLALAIGL. At 100 to 120 the chain is on the extracellular side; that stretch reads WGLAVKGSLGSDLGGPLPTDP. A helical membrane pass occupies residues 121 to 141; that stretch reads MLGLALGGLVVSAASLAGCLG. Topologically, residues 142 to 154 are cytoplasmic; it reads ALCENTCLLRGFS. The chain crosses the membrane as a helical span at residues 155-175; it reads GGILAFLVLEAVAGALVVALW. Residues 176-355 are Extracellular-facing; that stretch reads GPLQDSLEHT…APPAAKPARG (180 aa). Cystine bridges form between cysteine 212-cysteine 279, cysteine 213-cysteine 243, cysteine 229-cysteine 237, and cysteine 244-cysteine 258. The N-linked (GlcNAc...) asparagine glycan is linked to asparagine 228. The interval 327–355 is disordered; the sequence is YGPGAHGEDRAGPQSPSPGAPPAAKPARG. A compositionally biased stretch (pro residues) spans 341-355; that stretch reads SPSPGAPPAAKPARG.

It belongs to the tetraspanin (TM4SF) family. Interacts with ADAM10. As to expression, expressed in the eye, including iris, ciliary body, retinal pigment epithelium, but not lens (protein level).

The protein resides in the cell membrane. Its function is as follows. Part of TspanC8 subgroup, composed of 6 members that interact with the transmembrane metalloprotease ADAM10. This interaction is required for ADAM10 exit from the endoplasmic reticulum and for enzymatic maturation and trafficking to the cell surface as well as substrate specificity. Different TspanC8/ADAM10 complexes have distinct substrates. This is Tetraspanin-10 from Homo sapiens (Human).